A 326-amino-acid chain; its full sequence is Ribosomal large subunit pseudouridine synthase D (326 aa).

The region spanning 18-91 (QRLDQALAEM…IPLDIVYEDE (74 aa)) is the S4 RNA-binding domain. The active site involves aspartate 139.

Belongs to the pseudouridine synthase RluA family. In terms of assembly, in late stage pre-50S ribosomal subunit interacts with ObgE and DarP(YjgA).

It is found in the cytoplasm. It carries out the reaction uridine(1911/1915/1917) in 23S rRNA = pseudouridine(1911/1915/1917) in 23S rRNA. Its function is as follows. Responsible for synthesis of pseudouridine from uracil at positions 1911, 1915 and 1917 in 23S ribosomal RNA. Other positions are not modified. Uridine isomerization occurs as a late step during the assembly of the large ribosomal subunit. Member of a network of 50S ribosomal subunit biogenesis factors (ObgE, RluD, RsfS and DarP(YjgA)) which assembles along the 30S-50S interface, allowing 23S rRNA modification and preventing incorrect 23S rRNA structures from forming. This is Ribosomal large subunit pseudouridine synthase D from Escherichia coli (strain K12).